A 56-amino-acid polypeptide reads, in one-letter code: Large ribosomal subunit protein bL32 (56 aa).

Belongs to the bacterial ribosomal protein bL32 family.

The protein is Large ribosomal subunit protein bL32 of Brevibacillus brevis (strain 47 / JCM 6285 / NBRC 100599).